We begin with the raw amino-acid sequence, 335 residues long: MKNLILAIESSCDDSSIAIIDKNTLECKFHKKISQELDHSIYGGVVPELAARLHSEALPKILKQCKEHFKNLCAIAVTNEPGLSVSLLSGISMAKTLASALNLPLIPINHLKGHIYSLFLEEKISLDMGILLVSGGHTMVLYLKDDANLELLASTNDDSFGESFDKVAKMMNLGYPGGVIIENLAKNAKLKNISFNIPLKHSKELAYSFSGLKNAVRLEILKHENLSDEIKAEIAYAFENTACDHIMDKLEKIFNLYKFKNFGVVGGASANLHLRSRLQNLCQKYNANLKLAPLKFCSDNALMIARAAVDAYKKKEFVSIEEDILSPKNKNFSRI.

Residues histidine 110 and histidine 114 each contribute to the Fe cation site. Residues 132–136 (LVSGG), aspartate 165, glycine 178, and asparagine 271 contribute to the substrate site. Residue aspartate 299 participates in Fe cation binding.

Belongs to the KAE1 / TsaD family. Fe(2+) serves as cofactor.

It is found in the cytoplasm. It catalyses the reaction L-threonylcarbamoyladenylate + adenosine(37) in tRNA = N(6)-L-threonylcarbamoyladenosine(37) in tRNA + AMP + H(+). In terms of biological role, required for the formation of a threonylcarbamoyl group on adenosine at position 37 (t(6)A37) in tRNAs that read codons beginning with adenine. Is involved in the transfer of the threonylcarbamoyl moiety of threonylcarbamoyl-AMP (TC-AMP) to the N6 group of A37, together with TsaE and TsaB. TsaD likely plays a direct catalytic role in this reaction. In Campylobacter jejuni subsp. jejuni serotype O:6 (strain 81116 / NCTC 11828), this protein is tRNA N6-adenosine threonylcarbamoyltransferase.